The primary structure comprises 660 residues: Leucine-rich repeat transmembrane protein FLRT2 (660 aa).

Positions 1-35 (MGLQTTKWPSHGAFFLKSWLIISLGLYSQVSKLLA) are cleaved as a signal peptide. 2 disulfide bridges follow: Cys36–Cys42 and Cys40–Cys49. The LRRNT domain maps to 36 to 63 (CPSVCRCDRNFVYCNERSLTSVPLGIPE). Residues 36 to 541 (CPSVCRCDRN…TTSHSMGSPF (506 aa)) lie on the Extracellular side of the membrane. LRR repeat units follow at residues 64-85 (GVTV…AELH), 89-109 (SVHT…NLPK), 110-131 (NVRV…ALAQ), 134-155 (KLEE…DGAF), 160-181 (SLKL…LPVD), 182-202 (LQEL…AFQN), 205-225 (SLER…AEGT), 231-252 (KLKE…LPGT), 253-274 (HLIR…AFSN), and 277-298 (KLER…VFDN). A glycan (N-linked (GlcNAc...) asparagine) is linked at Asn202. A glycan (N-linked (GlcNAc...) asparagine) is linked at Asn298. The region spanning 310–362 (NPWFCDCSIKWVTEWLKYIPSSLNVRGFMCQGPEQVRGMAVRELNMNLLSCPT) is the LRRCT domain. 2 cysteine pairs are disulfide-bonded: Cys314–Cys339 and Cys316–Cys360. The span at 373–409 (APSTASPTTQPPTLSIPNPSRSYTPPTPTTSKLPTIP) shows a compositional bias: low complexity. The disordered stretch occupies residues 373–413 (APSTASPTTQPPTLSIPNPSRSYTPPTPTTSKLPTIPDWDG). A Fibronectin type-III domain is found at 419–517 (PPISERIQLS…ICSEATTHAS (99 aa)). N-linked (GlcNAc...) asparagine glycans are attached at residues Asn433 and Asn521. Residues 542 to 562 (LLAGLIGGAVIFVLVVLLSVF) form a helical membrane-spanning segment. The Cytoplasmic segment spans residues 563–660 (CWHMHKKGRY…SVPDLEHCHT (98 aa)).

In terms of assembly, self-associates (via leucine-rich repeats), giving rise to homooligomers. Interacts with FGFR1. Interacts with FGFR2. Interacts (via extracellular domain) with ADGRL1/LPHN1. Interacts (via extracellular domain) with ADGRL3 (via olfactomedin-like domain). Interacts (via extracellular domain) with UNC5D (via the first Ig-like domain). Can also interact (via extracellular domain) with UNC5B, but with much lower affinity. Interacts (via extracellular domain) with FN1. In terms of processing, N-glycosylated. Proteolytic cleavage in the juxtamembrane region gives rise to a soluble ectodomain. Cleavage is probably effected by a metalloprotease. Expressed in pancreas, skeletal muscle, brain, and heart.

The protein localises to the cell membrane. The protein resides in the endoplasmic reticulum membrane. Its subcellular location is the cell junction. It localises to the focal adhesion. It is found in the secreted. The protein localises to the extracellular space. The protein resides in the extracellular matrix. Its subcellular location is the microsome membrane. It localises to the synapse. It is found in the synaptosome. Its function is as follows. Functions in cell-cell adhesion, cell migration and axon guidance. Mediates cell-cell adhesion via its interactions with ADGRL3 and probably also other latrophilins that are expressed at the surface of adjacent cells. May play a role in the migration of cortical neurons during brain development via its interaction with UNC5D. Mediates axon growth cone collapse and plays a repulsive role in neuron guidance via its interaction with UNC5D, and possibly also other UNC-5 family members. Plays a role in fibroblast growth factor-mediated signaling cascades. Required for normal organization of the cardiac basement membrane during embryogenesis, and for normal embryonic epicardium and heart morphogenesis. The sequence is that of Leucine-rich repeat transmembrane protein FLRT2 (FLRT2) from Homo sapiens (Human).